The following is a 341-amino-acid chain: tRNA-specific 2-thiouridylase MnmA (341 aa).

Residues 8–15 (GMSGGVDS) and M34 each bind ATP. C94 acts as the Nucleophile in catalysis. C94 and C188 are joined by a disulfide. G118 lines the ATP pocket. An interaction with tRNA region spans residues 136–138 (KDQ). The Cysteine persulfide intermediate role is filled by C188. The interaction with tRNA stretch occupies residues 290–291 (RY).

The protein belongs to the MnmA/TRMU family.

Its subcellular location is the cytoplasm. The enzyme catalyses S-sulfanyl-L-cysteinyl-[protein] + uridine(34) in tRNA + AH2 + ATP = 2-thiouridine(34) in tRNA + L-cysteinyl-[protein] + A + AMP + diphosphate + H(+). Its function is as follows. Catalyzes the 2-thiolation of uridine at the wobble position (U34) of tRNA, leading to the formation of s(2)U34. The protein is tRNA-specific 2-thiouridylase MnmA of Sulfurimonas denitrificans (strain ATCC 33889 / DSM 1251) (Thiomicrospira denitrificans (strain ATCC 33889 / DSM 1251)).